A 465-amino-acid chain; its full sequence is Neuromedin-K receptor (465 aa).

Topologically, residues Met-1–Arg-84 are extracellular. 3 N-linked (GlcNAc...) asparagine glycosylation sites follow: Asn-23, Asn-50, and Asn-73. The chain crosses the membrane as a helical span at residues Ile-85–Ile-107. The Cytoplasmic segment spans residues Trp-108 to Arg-117. The chain crosses the membrane as a helical span at residues Thr-118–Thr-139. At Leu-140–Arg-159 the chain is on the extracellular side. Cys-158 and Cys-233 form a disulfide bridge. The chain crosses the membrane as a helical span at residues Phe-160–Val-181. Over Asp-182–Lys-201 the chain is Cytoplasmic. A helical transmembrane segment spans residues Ile-202–Ser-222. Residues Lys-223–Phe-245 are Extracellular-facing. A helical membrane pass occupies residues Thr-246 to Val-270. The Cytoplasmic portion of the chain corresponds to Gly-271–Lys-299. The chain crosses the membrane as a helical span at residues Met-300 to Leu-321. The Extracellular segment spans residues Thr-322–Ile-334. Residues Gln-335–Leu-359 traverse the membrane as a helical segment. Residues Asn-360–Ser-465 lie on the Cytoplasmic side of the membrane. The S-palmitoyl cysteine moiety is linked to residue Cys-374. The segment at Pro-415–Ser-465 is disordered. The span at Lys-445–Ser-465 shows a compositional bias: low complexity.

This sequence belongs to the G-protein coupled receptor 1 family. Post-translationally, the anchoring of this receptor to the plasma membrane is probably mediated by the palmitoylation of a cysteine residue.

Its subcellular location is the cell membrane. This is a receptor for the tachykinin neuropeptide neuromedin-K (neurokinin B). It is associated with G proteins that activate a phosphatidylinositol-calcium second messenger system. The rank order of affinity of this receptor to tachykinins is: neuromedin-K &gt; substance K &gt; substance P. The chain is Neuromedin-K receptor (TACR3) from Homo sapiens (Human).